Reading from the N-terminus, the 151-residue chain is Large ribosomal subunit protein bL9 (151 aa).

It belongs to the bacterial ribosomal protein bL9 family.

Functionally, binds to the 23S rRNA. This is Large ribosomal subunit protein bL9 from Thermosipho africanus (strain TCF52B).